The primary structure comprises 215 residues: Cytochrome b6 (215 aa).

The helical transmembrane segment at 32-52 (IFYCLGGITLTCFLVQVATGF) threads the bilayer. C35 contributes to the heme c binding site. Positions 86 and 100 each coordinate heme b. Helical transmembrane passes span 90 to 110 (ASMM…TGGF), 116 to 136 (LTWV…VTGY), and 186 to 206 (LHTF…FLMI). Positions 187 and 202 each coordinate heme b.

It belongs to the cytochrome b family. PetB subfamily. In terms of assembly, the 4 large subunits of the cytochrome b6-f complex are cytochrome b6, subunit IV (17 kDa polypeptide, PetD), cytochrome f and the Rieske protein, while the 4 small subunits are PetG, PetL, PetM and PetN. The complex functions as a dimer. The cofactor is heme b. Heme c serves as cofactor.

It is found in the plastid. It localises to the chloroplast thylakoid membrane. Its function is as follows. Component of the cytochrome b6-f complex, which mediates electron transfer between photosystem II (PSII) and photosystem I (PSI), cyclic electron flow around PSI, and state transitions. This chain is Cytochrome b6, found in Ostreococcus tauri.